A 183-amino-acid polypeptide reads, in one-letter code: uncharacterized protein (183 aa).

Belongs to the asfivirus S183L family.

This is an uncharacterized protein from Ornithodoros (relapsing fever ticks).